The primary structure comprises 361 residues: Nicotinate-nucleotide--dimethylbenzimidazole phosphoribosyltransferase (361 aa).

Catalysis depends on E315, which acts as the Proton acceptor.

This sequence belongs to the CobT family.

It carries out the reaction 5,6-dimethylbenzimidazole + nicotinate beta-D-ribonucleotide = alpha-ribazole 5'-phosphate + nicotinate + H(+). It participates in nucleoside biosynthesis; alpha-ribazole biosynthesis; alpha-ribazole from 5,6-dimethylbenzimidazole: step 1/2. In terms of biological role, catalyzes the synthesis of alpha-ribazole-5'-phosphate from nicotinate mononucleotide (NAMN) and 5,6-dimethylbenzimidazole (DMB). This is Nicotinate-nucleotide--dimethylbenzimidazole phosphoribosyltransferase from Clostridium perfringens (strain ATCC 13124 / DSM 756 / JCM 1290 / NCIMB 6125 / NCTC 8237 / Type A).